The primary structure comprises 614 residues: MIKKASLLTACSVTAFSAWAQDTSPDTLVVTANRFEQPRSTVLAPTTVVTRQDIDRWQSTSVNDVLRRLPGVDITQNGGSGQLSSIFIRGTNASHVLVLIDGVRLNLAGVSGSADLSQFPIALVQRVEYIRGPRSAVYGSDAIGGVVNIITTRDHPGTEISAGWGSNSYQNYDVSTQQQLGDKTRVTLLGDYAHTHGYDVVAYGNTGTQAQPDNDGFLSKTLYGALEHNFTDVWSGFVRGYGYDNRTNYDAYYSPGLPLVDTRKLYSQSWDAGLRYNGELIKSQLITSYSHSKDYNYDPHYGRYDSSATLDEMKQYTVQWANNIIIGHGNIGAGVDWQKQSTAPGTAYVEDGYDQRNTGIYLTGLQQVGDFTFEGAGRSDDNSQFGRHGTWQTSAGWEFIEGYRFIASYGTSYKAPNLGQLYGSYGNPNLNPEKSKQWEGAFEGLTAGVNWRISGYRNDVSDLIDYDDHTLKYYNEGKARIKGVEATANFDTGPLTHTVSYDYVDARNAITDTPLLRRAKQQVKYQLDWQLYDFDWGITYQYLGTRYDKDYSSYPYQTVKMGGVSLWDLAVAYPVTSHLTVRGKIANLFDKDYETVYGYQTAGREYTLSGSYTF.

The first 20 residues, 1–20 (MIKKASLLTACSVTAFSAWA), serve as a signal peptide directing secretion. Positions 26–33 (DTLVVTAN) match the TonB box motif. The TBDR plug domain maps to 38–152 (PRSTVLAPTT…IGGVVNIITT (115 aa)). Residues L83, S85, N92, and 110–111 (VS) each bind cyanocob(III)alamin. The 460-residue stretch at 155–614 (HPGTEISAGW…EYTLSGSYTF (460 aa)) folds into the TBDR beta-barrel domain. A run of 3 beta stranded transmembrane segments spans residues 158–165 (TEISAGWG), 169–178 (YQNYDVSTQQ), and 184–195 (TRVTLLGDYAHT). Ca(2+) contacts are provided by D199, Q211, D213, and D215. Transmembrane regions (beta stranded) follow at residues 217–227 (FLSKTLYGALE) and 232–248 (DVWS…NRTN). Residues Y249 and D250 each coordinate Ca(2+). A251 contributes to the cyanocob(III)alamin binding site. D261 lines the Ca(2+) pocket. Beta stranded transmembrane passes span 263–277 (RKLY…LRYN), 279–296 (ELIK…KDYN), 309–325 (TLDE…NNII), 328–337 (HGNIGAGVDW), 353–369 (YDQR…QQVG), 371–381 (FTFEGAGRSDD), 385–400 (FGRH…WEFI), 403–417 (YRFI…KAPN), 434–443 (KSKQWEGAFE), 449–458 (VNWRISGYRN), 473–490 (YYNE…TANF), 494–509 (PLTH…ARNA), 517–529 (RRAK…QLDW), and 535–550 (DWGI…YDKD). Position 309 (T309) interacts with cyanocob(III)alamin. Residue R517 coordinates cyanocob(III)alamin. Y551 lines the cyanocob(III)alamin pocket. 3 beta stranded membrane passes run 558–572 (TVKM…LAVA), 585–596 (IANLFDKDYETV), and 602–614 (AGRE…SYTF). Residues 597-614 (YGYQTAGREYTLSGSYTF) carry the TonB C-terminal box motif.

This sequence belongs to the TonB-dependent receptor family. BtuB (TC 1.B.14.3.1) subfamily.

It is found in the cell outer membrane. Its function is as follows. Involved in the active translocation of vitamin B12 (cyanocobalamin) across the outer membrane to the periplasmic space. It derives its energy for transport by interacting with the trans-periplasmic membrane protein TonB. This chain is Vitamin B12 transporter BtuB, found in Escherichia coli O6:K15:H31 (strain 536 / UPEC).